The sequence spans 107 residues: Rhodocoxin (107 aa).

Residues 2-106 (PTVTYVHPDG…GLIVRLPEEQ (105 aa)) form the 2Fe-2S ferredoxin-type domain. The [2Fe-2S] cluster site is built by C40, C46, C49, and C87.

This sequence belongs to the adrenodoxin/putidaredoxin family. [2Fe-2S] cluster is required as a cofactor.

In terms of biological role, ferredoxin-type protein which transfers electrons from rhodocoxin reductase to cytochrome CYP116 (ThcB), which is involved in the degradation of thiocarbamate herbicides. This Rhodococcus erythropolis (Arthrobacter picolinophilus) protein is Rhodocoxin (thcC).